The primary structure comprises 434 residues: 3-phosphoshikimate 1-carboxyvinyltransferase (434 aa).

Residues Lys22, Ser23, and Arg27 each contribute to the 3-phosphoshikimate site. Lys22 serves as a coordination point for phosphoenolpyruvate. Residues Gly93 and Arg121 each coordinate phosphoenolpyruvate. Residues Ser168, Ser169, Gln170, Ser199, Asp320, and Lys347 each coordinate 3-phosphoshikimate. Gln170 contacts phosphoenolpyruvate. Asp320 (proton acceptor) is an active-site residue. Phosphoenolpyruvate contacts are provided by Arg351, Arg394, and Lys419.

The protein belongs to the EPSP synthase family. Monomer.

It is found in the cytoplasm. The enzyme catalyses 3-phosphoshikimate + phosphoenolpyruvate = 5-O-(1-carboxyvinyl)-3-phosphoshikimate + phosphate. The protein operates within metabolic intermediate biosynthesis; chorismate biosynthesis; chorismate from D-erythrose 4-phosphate and phosphoenolpyruvate: step 6/7. In terms of biological role, catalyzes the transfer of the enolpyruvyl moiety of phosphoenolpyruvate (PEP) to the 5-hydroxyl of shikimate-3-phosphate (S3P) to produce enolpyruvyl shikimate-3-phosphate and inorganic phosphate. The sequence is that of 3-phosphoshikimate 1-carboxyvinyltransferase from Burkholderia ambifaria (strain ATCC BAA-244 / DSM 16087 / CCUG 44356 / LMG 19182 / AMMD) (Burkholderia cepacia (strain AMMD)).